We begin with the raw amino-acid sequence, 150 residues long: MEVILLDEIENFGQLGDKVKVKRGFARNFLLPKGKAVLATKKNMAYFDERRSELESKAAKAIEEAKARARAINELASLTIASKAGSEGRLFGSIGTRDIAKSLSDAGIPVMKNEVRLLNGFLRTLGEHEVHFKIYNGVFAQLKVIIISED.

The protein belongs to the bacterial ribosomal protein bL9 family.

In terms of biological role, binds to the 23S rRNA. The chain is Large ribosomal subunit protein bL9 from Hamiltonella defensa subsp. Acyrthosiphon pisum (strain 5AT).